We begin with the raw amino-acid sequence, 504 residues long: Aspartyl/glutamyl-tRNA(Asn/Gln) amidotransferase subunit B (504 aa).

The protein belongs to the GatB/GatE family. GatB subfamily. In terms of assembly, heterotrimer of A, B and C subunits.

It catalyses the reaction L-glutamyl-tRNA(Gln) + L-glutamine + ATP + H2O = L-glutaminyl-tRNA(Gln) + L-glutamate + ADP + phosphate + H(+). It carries out the reaction L-aspartyl-tRNA(Asn) + L-glutamine + ATP + H2O = L-asparaginyl-tRNA(Asn) + L-glutamate + ADP + phosphate + 2 H(+). In terms of biological role, allows the formation of correctly charged Asn-tRNA(Asn) or Gln-tRNA(Gln) through the transamidation of misacylated Asp-tRNA(Asn) or Glu-tRNA(Gln) in organisms which lack either or both of asparaginyl-tRNA or glutaminyl-tRNA synthetases. The reaction takes place in the presence of glutamine and ATP through an activated phospho-Asp-tRNA(Asn) or phospho-Glu-tRNA(Gln). The polypeptide is Aspartyl/glutamyl-tRNA(Asn/Gln) amidotransferase subunit B (Rhodococcus opacus (strain B4)).